A 461-amino-acid chain; its full sequence is tRNA modification GTPase MnmE (461 aa).

(6S)-5-formyl-5,6,7,8-tetrahydrofolate is bound by residues R22, E87, and R126. The region spanning 222–382 (GLKTVIVGKP…LEETIFNMVV (161 aa)) is the TrmE-type G domain. Position 232 (N232) interacts with K(+). Residues 232–237 (NVGKSS), 251–257 (TDIPGTT), and 276–279 (DTAG) contribute to the GTP site. S236 serves as a coordination point for Mg(2+). Residues T251, I253, and T256 each coordinate K(+). Position 257 (T257) interacts with Mg(2+). K461 lines the (6S)-5-formyl-5,6,7,8-tetrahydrofolate pocket.

The protein belongs to the TRAFAC class TrmE-Era-EngA-EngB-Septin-like GTPase superfamily. TrmE GTPase family. Homodimer. Heterotetramer of two MnmE and two MnmG subunits. K(+) is required as a cofactor.

It is found in the cytoplasm. Exhibits a very high intrinsic GTPase hydrolysis rate. Involved in the addition of a carboxymethylaminomethyl (cmnm) group at the wobble position (U34) of certain tRNAs, forming tRNA-cmnm(5)s(2)U34. This chain is tRNA modification GTPase MnmE, found in Desulforamulus reducens (strain ATCC BAA-1160 / DSM 100696 / MI-1) (Desulfotomaculum reducens).